The following is a 446-amino-acid chain: Branched-chain amino acid permease BrnQ (446 aa).

12 helical membrane passes run 13–33 (ISSM…PAYL), 41–61 (LWIS…LAIA), 81–101 (KYSY…FAIP), 120–140 (MAKS…MLFF), 154–174 (FLTP…LLHP), 196–216 (VLAG…IIVI), 237–257 (TGVL…LVGA), 285–305 (GAVI…IGLI), 325–345 (WAII…TTII), 347–367 (FSLP…LLAL), 381–401 (IMTA…LPAG), and 421–441 (GLGW…KGVI).

This sequence belongs to the branched chain amino acid transporter family.

It localises to the cell membrane. With respect to regulation, leucine uptake is inhibited by the proton ionophore carbonyl cyanide m-chlorophenylhydrazone (CCCP). Functionally, branched chain amino acid transport system which is involved in the uptake of leucine, valine and isoleucine. The proton motive force is probably the driving force for transport. The protein is Branched-chain amino acid permease BrnQ of Lactobacillus delbrueckii subsp. lactis.